Here is a 246-residue protein sequence, read N- to C-terminus: Protein lin-37 homolog (246 aa).

Position 1 is an N-acetylmethionine (Met-1). Residues Lys-5 and Lys-7 each participate in a glycyl lysine isopeptide (Lys-Gly) (interchain with G-Cter in SUMO2) cross-link. Positions 39–55 are enriched in basic and acidic residues; it reads RLDEEAGKTPLDTHNKD. 2 disordered regions span residues 39 to 90 and 129 to 208; these read RLDE…GGPQ and VRER…TLIY. Phosphoserine occurs at positions 135 and 138. Phosphothreonine is present on Thr-167. Residues Ser-182 and Ser-202 each carry the phosphoserine modification.

In terms of assembly, component of the DREAM complex (also named LINC complex) at least composed of E2F4, E2F5, LIN9, LIN37, LIN52, LIN54, MYBL1, MYBL2, RBL1, RBL2, RBBP4, TFDP1 and TFDP2. The complex exists in quiescent cells where it represses cell cycle-dependent genes. It dissociates in S phase when LIN9, LIN37, LIN52 and LIN54 form a subcomplex that binds to MYBL2.

The chain is Protein lin-37 homolog (Lin37) from Mus musculus (Mouse).